The following is a 498-amino-acid chain: MASDQHRPKPRLSLRSSTTIRYGSMSSEHPDGDPSTPQTTSISQRRSYIAVAVLCYINLLNYMDRYTIAGVLLRIQKFFFISDSTSGLLQTVFICSFMFLAPVFGYLGDRYDRKLIMIVGLVMWIVTTLGSSFVRKSHFWVLVATRALVGTGEASYSTIAPTIIGDLFAGSKRTLMISFFYIFIPVGSGLGYIIGATVADATGDWRWALRVSPALGGLGLLLLVFLIPNPPRGASDNGGANMETTSYTEDIKYLLKNRSFVWSSLGVTAMAFVTGALAFWTPTFLSRAQVTQGLKQPCKEEPCDSVDSYIFGAITVVTGVVGVFLGTCISKKLRDRVPNADPLICAVGMLSSSPCFFIAIVLASTSIPATYTFIAIGETLLSLNWAILADILLYVVVPNRRATAEALQIMVCHLLGDAGSPYLIGAISDSLSKYNTTDPSWDFRRLEYSVLLCPFIGVLGGLFFLMTSLYIKEDRKAAELLTSGQTPQPEITTVSESV.

The next 12 membrane-spanning stretches (helical) occupy residues 49–71 (IAVA…IAGV), 87–107 (GLLQ…FGYL), 114–134 (KLIM…SSFV), 148–168 (LVGT…GDLF), 175–195 (LMIS…YIIG), 207–227 (WALR…VFLI), 260–280 (FVWS…LAFW), 309–329 (YIFG…GTCI), 343–363 (LICA…IVLA), 373–393 (FIAI…DILL), 407–427 (LQIM…IGAI), and 451–471 (LLCP…SLYI).

The protein belongs to the major facilitator superfamily. Spinster (TC 2.A.1.49) family.

The protein resides in the membrane. Functionally, sphingolipid transporter. The protein is Protein spinster homolog 3 (spns3) of Danio rerio (Zebrafish).